Reading from the N-terminus, the 160-residue chain is Anaerobic nitrite reductase Glb1-1 (160 aa).

The Globin domain maps to 8-157; it reads GFTEEQEALV…LVNAIKSEMK (150 aa). Residues 41-45 carry the Homodimerization motif; that stretch reads EIAPS. The heme b site is built by Ser51, Lys65, His69, Lys99, and His104. Positions 111–123 match the Homodimerization motif; it reads DEHFEVTKFALLE.

This sequence belongs to the plant globin family. Homodimer. Heme b serves as cofactor.

It carries out the reaction Fe(III)-heme b-[protein] + nitric oxide + H2O = Fe(II)-heme b-[protein] + nitrite + 2 H(+). Functionally, phytoglobin that reduces nitrite to nitric oxide (NO) under anoxic conditions (e.g. during flooding or in waterlogged soil) and upon root nodulation. Required for general plant development and during nodulation, especially for the onset of symbiosis. Monitors nitric oxide (NO) levels during early phase of the nitrogen-fixing symbiosis and buffers oxygen in functioning nodules. May not function as an oxygen storage or transport protein. Has an unusually high affinity for O(2) through a hexacoordinate heme iron because of a very low dissociation constant. The chain is Anaerobic nitrite reductase Glb1-1 from Medicago truncatula (Barrel medic).